Reading from the N-terminus, the 250-residue chain is MSDTTSTIIFEHPLNEKMRAWLRIESSLQQLTSQRHLNSLASSLAFFRTITELLEVLERGEVRSELLKELERQQAKLKQWAEIPDVDINIVNSFRLKLKERAIALSKAPRLGQSLKEDKIISLVRQRLSIPSGCCGFDLPTLHLWLHLPQSERDKMVAFWIDSLLPLQQALDSILELIRQSAIFRSEISKNGFHQNTAEGADLLRLRLPLTPLLFPQISGHKTRFAIRFLPLDSEKGSVPAHLPFELACC.

The protein belongs to the ZapD family. Interacts with FtsZ.

The protein resides in the cytoplasm. In terms of biological role, cell division factor that enhances FtsZ-ring assembly. Directly interacts with FtsZ and promotes bundling of FtsZ protofilaments, with a reduction in FtsZ GTPase activity. This Photorhabdus laumondii subsp. laumondii (strain DSM 15139 / CIP 105565 / TT01) (Photorhabdus luminescens subsp. laumondii) protein is Cell division protein ZapD.